The sequence spans 239 residues: Ribonuclease PH (239 aa).

Phosphate-binding positions include R87 and 125–127 (GTR).

This sequence belongs to the RNase PH family. As to quaternary structure, homohexameric ring arranged as a trimer of dimers.

The enzyme catalyses tRNA(n+1) + phosphate = tRNA(n) + a ribonucleoside 5'-diphosphate. Its function is as follows. Phosphorolytic 3'-5' exoribonuclease that plays an important role in tRNA 3'-end maturation. Removes nucleotide residues following the 3'-CCA terminus of tRNAs; can also add nucleotides to the ends of RNA molecules by using nucleoside diphosphates as substrates, but this may not be physiologically important. Probably plays a role in initiation of 16S rRNA degradation (leading to ribosome degradation) during starvation. The polypeptide is Ribonuclease PH (Dehalococcoides mccartyi (strain ATCC BAA-2266 / KCTC 15142 / 195) (Dehalococcoides ethenogenes (strain 195))).